A 303-amino-acid polypeptide reads, in one-letter code: Signal recognition particle receptor FtsY (303 aa).

GTP is bound by residues 108 to 115 (GVNGVGKT), 190 to 194 (DTAGR), and 254 to 257 (TKLD).

The protein belongs to the GTP-binding SRP family. FtsY subfamily. Part of the signal recognition particle protein translocation system, which is composed of SRP and FtsY. SRP is a ribonucleoprotein composed of Ffh and a 4.5S RNA molecule.

The protein resides in the cell inner membrane. The protein localises to the cytoplasm. The enzyme catalyses GTP + H2O = GDP + phosphate + H(+). Involved in targeting and insertion of nascent membrane proteins into the cytoplasmic membrane. Acts as a receptor for the complex formed by the signal recognition particle (SRP) and the ribosome-nascent chain (RNC). Interaction with SRP-RNC leads to the transfer of the RNC complex to the Sec translocase for insertion into the membrane, the hydrolysis of GTP by both Ffh and FtsY, and the dissociation of the SRP-FtsY complex into the individual components. This Rickettsia prowazekii (strain Madrid E) protein is Signal recognition particle receptor FtsY.